Consider the following 207-residue polypeptide: Imidazoleglycerol-phosphate dehydratase (207 aa).

The protein belongs to the imidazoleglycerol-phosphate dehydratase family.

It is found in the cytoplasm. It carries out the reaction D-erythro-1-(imidazol-4-yl)glycerol 3-phosphate = 3-(imidazol-4-yl)-2-oxopropyl phosphate + H2O. The protein operates within amino-acid biosynthesis; L-histidine biosynthesis; L-histidine from 5-phospho-alpha-D-ribose 1-diphosphate: step 6/9. The chain is Imidazoleglycerol-phosphate dehydratase from Mycobacterium avium (strain 104).